Here is a 654-residue protein sequence, read N- to C-terminus: DNA ligase (654 aa).

Residues 34 to 38, 83 to 84, and Glu-114 each bind NAD(+); these read DLEYD and SL. Catalysis depends on Lys-116, which acts as the N6-AMP-lysine intermediate. Positions 137, 171, 280, and 304 each coordinate NAD(+). Zn(2+) contacts are provided by Cys-396, Cys-399, Cys-414, and Cys-419. The BRCT domain maps to 577-654; that stretch reads VISTILSGYT…EEQFYDLIKQ (78 aa).

It belongs to the NAD-dependent DNA ligase family. LigA subfamily. The cofactor is Mg(2+). Mn(2+) serves as cofactor.

The catalysed reaction is NAD(+) + (deoxyribonucleotide)n-3'-hydroxyl + 5'-phospho-(deoxyribonucleotide)m = (deoxyribonucleotide)n+m + AMP + beta-nicotinamide D-nucleotide.. Its function is as follows. DNA ligase that catalyzes the formation of phosphodiester linkages between 5'-phosphoryl and 3'-hydroxyl groups in double-stranded DNA using NAD as a coenzyme and as the energy source for the reaction. It is essential for DNA replication and repair of damaged DNA. The protein is DNA ligase of Mycoplasmopsis agalactiae (strain NCTC 10123 / CIP 59.7 / PG2) (Mycoplasma agalactiae).